The primary structure comprises 141 residues: Hemoglobin subunit alpha (141 aa).

One can recognise a Globin domain in the interval 1 to 141 (VLSDNDKTNV…VSTVLTSKYR (141 aa)). Ser3 carries the post-translational modification Phosphoserine. Lys7 is subject to N6-succinyllysine. A Phosphothreonine modification is found at Thr8. Lys11 bears the N6-succinyllysine mark. Lys16 carries the N6-acetyllysine; alternate modification. Lys16 carries the post-translational modification N6-succinyllysine; alternate. Tyr24 is modified (phosphotyrosine). Ser35 is modified (phosphoserine). Lys40 carries the post-translational modification N6-succinyllysine. An O2-binding site is contributed by His58. Residue His87 coordinates heme b. A Phosphoserine modification is found at Ser102. Thr108 carries the phosphothreonine modification. Ser124 bears the Phosphoserine mark. A phosphothreonine mark is found at Thr134 and Thr137. A Phosphoserine modification is found at Ser138.

It belongs to the globin family. Heterotetramer of two alpha chains and two beta chains. As to expression, red blood cells.

In terms of biological role, involved in oxygen transport from the lung to the various peripheral tissues. Its function is as follows. Hemopressin acts as an antagonist peptide of the cannabinoid receptor CNR1. Hemopressin-binding efficiently blocks cannabinoid receptor CNR1 and subsequent signaling. The protein is Hemoglobin subunit alpha (HBA) of Loxodonta africana (African elephant).